Here is a 432-residue protein sequence, read N- to C-terminus: MNLDSTALAYQSGFGNEFSSEALPGALPVGQNSPQKAPYGLYAELLSGTAFTMARSEARRTWLYRITPSAKHPPFRRLERQIAGAELDAPTPNRLRWDPLALPEQPTDFLDGLLRMAANAPGDKPAGVSIYQYLANRSMERCFYDADGELLLVPQLGRLRLCTELGALQVEPLEIAVIPRGMKFRVELLDGEARGYIAENHGAPLRLPDLGPIGSNGLANPRDFLTPVARYEDSRQPLQLVQKYLGELWACELDHSPLDVVAWHGNNVPYKYDLRRFNTIGTVSFDHPDPSIFTVLTSPTSVPGLANIDFVIFPPRWMVAENTFRPPWFHRNLMNEFMGLIQGAYDAKAGGFVPGGASLHSCMSAHGPDAESCDKAIAADLKPHRIDQTMAFMFETSQVLRPSRAALETPALQNDYDACWASLVSTFNPQRR.

The active-site Proton acceptor is histidine 287. Residues histidine 330 and glutamate 336 each coordinate Fe cation. 2 residues coordinate homogentisate: tyrosine 345 and histidine 366. Residue histidine 366 coordinates Fe cation.

This sequence belongs to the homogentisate dioxygenase family. In terms of assembly, hexamer; dimer of trimers. It depends on Fe cation as a cofactor.

It carries out the reaction homogentisate + O2 = 4-maleylacetoacetate + H(+). The protein operates within amino-acid degradation; L-phenylalanine degradation; acetoacetate and fumarate from L-phenylalanine: step 4/6. Functionally, involved in the catabolism of homogentisate (2,5-dihydroxyphenylacetate or 2,5-OH-PhAc), a central intermediate in the degradation of phenylalanine and tyrosine. Catalyzes the oxidative ring cleavage of the aromatic ring of homogentisate to yield maleylacetoacetate. The chain is Homogentisate 1,2-dioxygenase from Pseudomonas aeruginosa (strain ATCC 15692 / DSM 22644 / CIP 104116 / JCM 14847 / LMG 12228 / 1C / PRS 101 / PAO1).